The sequence spans 156 residues: Small ribosomal subunit protein uS7 (156 aa).

Belongs to the universal ribosomal protein uS7 family. In terms of assembly, part of the 30S ribosomal subunit. Contacts proteins S9 and S11.

Its function is as follows. One of the primary rRNA binding proteins, it binds directly to 16S rRNA where it nucleates assembly of the head domain of the 30S subunit. Is located at the subunit interface close to the decoding center, probably blocks exit of the E-site tRNA. This chain is Small ribosomal subunit protein uS7, found in Yersinia enterocolitica serotype O:8 / biotype 1B (strain NCTC 13174 / 8081).